The primary structure comprises 298 residues: Probable alpha-L-glutamate ligase (298 aa).

One can recognise an ATP-grasp domain in the interval 104–287; that stretch reads MQLLSRHGIG…VAGKIIEFLE (184 aa). ATP is bound by residues K141, 178–179, D187, and 211–213; these read EY and RSN. Mg(2+) contacts are provided by D248, E260, and N262. Mn(2+) is bound by residues D248, E260, and N262.

It belongs to the RimK family. It depends on Mg(2+) as a cofactor. Mn(2+) is required as a cofactor.

This chain is Probable alpha-L-glutamate ligase, found in Aeromonas salmonicida (strain A449).